Consider the following 239-residue polypeptide: Proteasome subunit beta type-6 (239 aa).

N-acetylalanine is present on alanine 2. A propeptide spans alanine 2–glycine 34 (removed in mature form). The Nucleophile role is filled by threonine 35. Threonine 69 is modified (phosphothreonine).

It belongs to the peptidase T1B family. The 26S proteasome consists of a 20S proteasome core and two 19S regulatory subunits. The 20S proteasome core is a barrel-shaped complex made of 28 subunits that are arranged in four stacked rings. The two outer rings are each formed by seven alpha subunits, and the two inner rings are formed by seven beta subunits. The proteolytic activity is exerted by three beta-subunits PSMB5, PSMB6 and PSMB7.

It localises to the cytoplasm. The protein localises to the nucleus. The enzyme catalyses Cleavage of peptide bonds with very broad specificity.. Functionally, component of the 20S core proteasome complex involved in the proteolytic degradation of most intracellular proteins. This complex plays numerous essential roles within the cell by associating with different regulatory particles. Associated with two 19S regulatory particles, forms the 26S proteasome and thus participates in the ATP-dependent degradation of ubiquitinated proteins. The 26S proteasome plays a key role in the maintenance of protein homeostasis by removing misfolded or damaged proteins that could impair cellular functions, and by removing proteins whose functions are no longer required. Associated with the PA200 or PA28, the 20S proteasome mediates ubiquitin-independent protein degradation. This type of proteolysis is required in several pathways including spermatogenesis (20S-PA200 complex) or generation of a subset of MHC class I-presented antigenic peptides (20S-PA28 complex). Within the 20S core complex, PSMB6 displays a peptidylglutamyl-hydrolyzing activity also termed postacidic or caspase-like activity, meaning that the peptides bond hydrolysis occurs directly after acidic residues. The protein is Proteasome subunit beta type-6 (PSMB6) of Bos taurus (Bovine).